The sequence spans 223 residues: Golgi SNAP receptor complex member 1-1 (223 aa).

The Cytoplasmic segment spans residues 1–201 (MDVPSSWDAL…AAIKRKKSMD (201 aa)). The stretch at 8 to 67 (DALRKQARKIEAQLDEQMHSYRRLVSTKALSKSDGNESDLEAGIDLLLRQLQQVNAQMQA) forms a coiled coil. Residues 202 to 222 (TIILSLVAAVCTFLIFIYWIT) form a helical; Anchor for type IV membrane protein membrane-spanning segment. Position 223 (Lys-223) is a topological domain, vesicular.

It belongs to the GOSR1 family. As to quaternary structure, component of several multiprotein Golgi SNARE complexes.

Its subcellular location is the golgi apparatus membrane. Involved in transport from the ER to the Golgi apparatus as well as in intra-Golgi transport. It belongs to a super-family of proteins called t-SNAREs or soluble NSF (N-ethylmaleimide-sensitive factor) attachment protein receptor. The chain is Golgi SNAP receptor complex member 1-1 (GOS11) from Arabidopsis thaliana (Mouse-ear cress).